The sequence spans 798 residues: Translation initiation factor IF-2 (798 aa).

The interval 40–207 is disordered; it reads SEQETKLRQA…QQESAKPAVP (168 aa). The segment covering 57-186 has biased composition (low complexity); it reads NTQSKATNNQ…RNNFNNQNRN (130 aa). A compositionally biased stretch (basic residues) spans 187 to 196; sequence RFNKKGKKGK. In terms of domain architecture, tr-type G spans 300 to 469; that stretch reads TRPPVVTIMG…LLIAEVEDLK (170 aa). Positions 309-316 are G1; it reads GHVDHGKT. Residue 309 to 316 coordinates GTP; it reads GHVDHGKT. Residues 334–338 form a G2 region; the sequence is GITQH. The tract at residues 355-358 is G3; that stretch reads DTPG. GTP-binding positions include 355-359 and 409-412; these read DTPGH and NKID. Residues 409-412 form a G4 region; that stretch reads NKID. The segment at 445 to 447 is G5; it reads SAK.

It belongs to the TRAFAC class translation factor GTPase superfamily. Classic translation factor GTPase family. IF-2 subfamily.

The protein localises to the cytoplasm. Its function is as follows. One of the essential components for the initiation of protein synthesis. Protects formylmethionyl-tRNA from spontaneous hydrolysis and promotes its binding to the 30S ribosomal subunits. Also involved in the hydrolysis of GTP during the formation of the 70S ribosomal complex. The protein is Translation initiation factor IF-2 of Enterococcus faecalis (strain ATCC 700802 / V583).